Reading from the N-terminus, the 290-residue chain is Shikimate dehydrogenase (NADP(+)) (290 aa).

Shikimate contacts are provided by residues 21–23 (SLS) and T68. K72 acts as the Proton acceptor in catalysis. E84 serves as a coordination point for NADP(+). N93 and D108 together coordinate shikimate. Residues 132–136 (GYGGA) and L230 each bind NADP(+). Shikimate is bound at residue Y232. G253 contacts NADP(+).

Belongs to the shikimate dehydrogenase family. In terms of assembly, homodimer.

The enzyme catalyses shikimate + NADP(+) = 3-dehydroshikimate + NADPH + H(+). It participates in metabolic intermediate biosynthesis; chorismate biosynthesis; chorismate from D-erythrose 4-phosphate and phosphoenolpyruvate: step 4/7. In terms of biological role, involved in the biosynthesis of the chorismate, which leads to the biosynthesis of aromatic amino acids. Catalyzes the reversible NADPH linked reduction of 3-dehydroshikimate (DHSA) to yield shikimate (SA). The polypeptide is Shikimate dehydrogenase (NADP(+)) (Synechocystis sp. (strain ATCC 27184 / PCC 6803 / Kazusa)).